The chain runs to 214 residues: MTVNTQLNYQVYNWEGQVSGNADLNLKVSQDSGMYLVHRALVKQSNEKRQGSANTKTRSEVRGGGRKPWRQKGTGRARAGSIRSPLWRGGGVIFGPKPRSFTKKMNKKERQLALRTALNNKSVNTLIVENFNSYFHQPKTKLFMEAIHRWNLDLNKKVLVIVDKKDPNVYLSIRNLHNVELISADTLNIMALLAAHKIIITVDALSKIQEVYNG.

Residues 42-81 (VKQSNEKRQGSANTKTRSEVRGGGRKPWRQKGTGRARAGS) are disordered. Basic residues predominate over residues 64–75 (GGRKPWRQKGTG).

The protein belongs to the universal ribosomal protein uL4 family. As to quaternary structure, part of the 50S ribosomal subunit.

It is found in the plastid. Its subcellular location is the chloroplast. Functionally, probably binds the 23S rRNA. This Pyropia yezoensis (Susabi-nori) protein is Large ribosomal subunit protein uL4c (rpl4).